The primary structure comprises 569 residues: Formate hydrogenlyase subunit 5 (569 aa).

The propeptide occupies 538 to 569 (MTVVDVRKKKSKVVPYKELERYSIERKNSPLK).

Belongs to the complex I 49 kDa subunit family. FHL comprises of a formate dehydrogenase, unidentified electron carriers and a hydrogenase (isoenzyme 3). In this non-energy conserving pathway molecular hydrogen and carbodioxide from formate are released. [4Fe-4S] cluster is required as a cofactor. Ni(2+) serves as cofactor.

The polypeptide is Formate hydrogenlyase subunit 5 (hycE) (Escherichia coli (strain K12)).